The chain runs to 300 residues: Ribosomal protein L11 methyltransferase (300 aa).

The S-adenosyl-L-methionine site is built by threonine 152, glycine 173, aspartate 195, and asparagine 234.

This sequence belongs to the methyltransferase superfamily. PrmA family.

The protein resides in the cytoplasm. It catalyses the reaction L-lysyl-[protein] + 3 S-adenosyl-L-methionine = N(6),N(6),N(6)-trimethyl-L-lysyl-[protein] + 3 S-adenosyl-L-homocysteine + 3 H(+). Its function is as follows. Methylates ribosomal protein L11. This Burkholderia orbicola (strain MC0-3) protein is Ribosomal protein L11 methyltransferase.